A 501-amino-acid chain; its full sequence is Cytochrome P450 90A4 (501 aa).

A helical transmembrane segment spans residues 2 to 22 (AAAALLLLAAAAAAVVVAMAL). Heme is bound at residue Cys-446.

Belongs to the cytochrome P450 family. Requires heme as cofactor. As to expression, highly expressed in shoot apex and inflorenscence. Expressed in roots, stems, leaf blades and leaf sheaths.

It is found in the cell membrane. It functions in the pathway plant hormone biosynthesis; brassinosteroid biosynthesis. In terms of biological role, catalyzes the C23-alpha-hydroxylation step in brassinosteroid biosynthesis. Converts 6-deoxocathasterone to 6-deoxoteasterone in the late C6-oxidation pathway and cathasterone to teasterone (TE) in the early C6-oxidation pathway of brassinolide (BL) biosynthesis. This is Cytochrome P450 90A4 from Oryza sativa subsp. japonica (Rice).